The following is a 327-amino-acid chain: Phenylalanine--tRNA ligase alpha subunit (327 aa).

Glutamate 252 is a Mg(2+) binding site.

It belongs to the class-II aminoacyl-tRNA synthetase family. Phe-tRNA synthetase alpha subunit type 1 subfamily. As to quaternary structure, tetramer of two alpha and two beta subunits. Mg(2+) serves as cofactor.

It is found in the cytoplasm. The catalysed reaction is tRNA(Phe) + L-phenylalanine + ATP = L-phenylalanyl-tRNA(Phe) + AMP + diphosphate + H(+). This chain is Phenylalanine--tRNA ligase alpha subunit, found in Proteus mirabilis (strain HI4320).